The sequence spans 250 residues: UDP-2,3-diacylglucosamine hydrolase (250 aa).

Mn(2+) is bound by residues D8, H10, D41, N79, and H115. 79–80 (NH) is a binding site for substrate. Positions 123, 165, 168, and 196 each coordinate substrate. The Mn(2+) site is built by H196 and H198.

The protein belongs to the LpxH family. The cofactor is Mn(2+).

It is found in the cell inner membrane. It catalyses the reaction UDP-2-N,3-O-bis[(3R)-3-hydroxytetradecanoyl]-alpha-D-glucosamine + H2O = 2-N,3-O-bis[(3R)-3-hydroxytetradecanoyl]-alpha-D-glucosaminyl 1-phosphate + UMP + 2 H(+). The protein operates within glycolipid biosynthesis; lipid IV(A) biosynthesis; lipid IV(A) from (3R)-3-hydroxytetradecanoyl-[acyl-carrier-protein] and UDP-N-acetyl-alpha-D-glucosamine: step 4/6. Its function is as follows. Hydrolyzes the pyrophosphate bond of UDP-2,3-diacylglucosamine to yield 2,3-diacylglucosamine 1-phosphate (lipid X) and UMP by catalyzing the attack of water at the alpha-P atom. Involved in the biosynthesis of lipid A, a phosphorylated glycolipid that anchors the lipopolysaccharide to the outer membrane of the cell. This chain is UDP-2,3-diacylglucosamine hydrolase, found in Blochmanniella pennsylvanica (strain BPEN).